A 310-amino-acid chain; its full sequence is Apolipoprotein E (310 aa).

The N-terminal stretch at 1-18 is a signal peptide; it reads MKVLWPALVVTLLAGCRA. Repeat copies occupy residues 77–98, 99–120, 121–142, 143–164, 165–186, 187–208, 209–226, and 227–248. The 8 X 22 AA approximate tandem repeats stretch occupies residues 77–248; the sequence is ALMDDTMKEV…RLDEVREQVQ (172 aa). Positions 155 to 165 are LDL and other lipoprotein receptors binding; it reads HLRKLRKRLLR. Position 159 to 162 (159 to 162) interacts with heparin; the sequence is LRKR. The lipid-binding and lipoprotein association stretch occupies residues 207 to 283; sequence HTLVSKPLQE…SWFEPLVQDM (77 aa). Heparin is bound at residue 222 to 229; that stretch reads AQRLRGRL. Residues 259–310 form a homooligomerization region; that stretch reads NQVRLQAEAFQGRLKSWFEPLVQDMQQKWAELVEKVQLALRAVPTSVPSEKQ. Residues 271–283 are specificity for association with VLDL; that stretch reads RLKSWFEPLVQDM.

Belongs to the apolipoprotein A1/A4/E family. As to quaternary structure, homotetramer. May interact with ABCA1; functionally associated with ABCA1 in the biogenesis of HDLs. May interact with APP/A4 amyloid-beta peptide; the interaction is extremely stable in vitro but its physiological significance is unclear. May interact with MAPT. May interact with MAP2. In the cerebrospinal fluid, interacts with secreted SORL1. Interacts with PMEL; this allows the loading of PMEL luminal fragment on ILVs to induce fibril nucleation. In terms of processing, APOE exists as multiple glycosylated and sialylated glycoforms within cells and in plasma. The extent of glycosylation and sialylation are tissue and context specific. Glycated in plasma VLDL. Post-translationally, phosphorylated by FAM20C in the extracellular medium.

It localises to the secreted. The protein localises to the extracellular space. Its subcellular location is the extracellular matrix. It is found in the extracellular vesicle. The protein resides in the endosome. It localises to the multivesicular body. APOE is an apolipoprotein, a protein associating with lipid particles, that mainly functions in lipoprotein-mediated lipid transport between organs via the plasma and interstitial fluids. APOE is a core component of plasma lipoproteins and is involved in their production, conversion and clearance. Apolipoproteins are amphipathic molecules that interact both with lipids of the lipoprotein particle core and the aqueous environment of the plasma. As such, APOE associates with chylomicrons, chylomicron remnants, very low density lipoproteins (VLDL) and intermediate density lipoproteins (IDL) but shows a preferential binding to high-density lipoproteins (HDL). It also binds a wide range of cellular receptors including the LDL receptor/LDLR and the very low-density lipoprotein receptor/VLDLR that mediate the cellular uptake of the APOE-containing lipoprotein particles. Finally, APOE also has a heparin-binding activity and binds heparan-sulfate proteoglycans on the surface of cells, a property that supports the capture and the receptor-mediated uptake of APOE-containing lipoproteins by cells. The sequence is that of Apolipoprotein E (APOE) from Dicerorhinus sumatrensis harrissoni (Bornean rhinoceros).